The following is a 148-amino-acid chain: Protein PLANT CADMIUM RESISTANCE 9 (148 aa).

The helical transmembrane segment at 59–78 (LAGLMVVAMSSIGCGWYYAS) threads the bilayer.

It belongs to the cornifelin family.

The protein resides in the membrane. In terms of biological role, may be involved in cadmium resistance. The sequence is that of Protein PLANT CADMIUM RESISTANCE 9 (PCR9) from Arabidopsis thaliana (Mouse-ear cress).